The chain runs to 176 residues: Large ribosomal subunit protein uL6 (176 aa).

Belongs to the universal ribosomal protein uL6 family. In terms of assembly, part of the 50S ribosomal subunit.

In terms of biological role, this protein binds to the 23S rRNA, and is important in its secondary structure. It is located near the subunit interface in the base of the L7/L12 stalk, and near the tRNA binding site of the peptidyltransferase center. This Burkholderia mallei (strain NCTC 10247) protein is Large ribosomal subunit protein uL6.